A 126-amino-acid chain; its full sequence is Holo-[acyl-carrier-protein] synthase (126 aa).

Residues aspartate 9 and glutamate 57 each contribute to the Mg(2+) site.

This sequence belongs to the P-Pant transferase superfamily. AcpS family. Mg(2+) is required as a cofactor.

Its subcellular location is the cytoplasm. It catalyses the reaction apo-[ACP] + CoA = holo-[ACP] + adenosine 3',5'-bisphosphate + H(+). Functionally, transfers the 4'-phosphopantetheine moiety from coenzyme A to a Ser of acyl-carrier-protein. This chain is Holo-[acyl-carrier-protein] synthase, found in Alteromonas mediterranea (strain DSM 17117 / CIP 110805 / LMG 28347 / Deep ecotype).